The chain runs to 223 residues: uncharacterized protein (223 aa).

Residues 117-148 are disordered; it reads THAHTHAHTHGHTHTRAHSTHAHTHAHSHYHT.

This is an uncharacterized protein from Homo sapiens (Human).